The primary structure comprises 202 residues: Dephospho-CoA kinase (202 aa).

The DPCK domain maps to 3–202; the sequence is IFGLTGGIGS…ISHRSKYLSC (200 aa). 11–16 serves as a coordination point for ATP; that stretch reads GSGKSL.

It belongs to the CoaE family.

The protein resides in the cytoplasm. The enzyme catalyses 3'-dephospho-CoA + ATP = ADP + CoA + H(+). It functions in the pathway cofactor biosynthesis; coenzyme A biosynthesis; CoA from (R)-pantothenate: step 5/5. Its function is as follows. Catalyzes the phosphorylation of the 3'-hydroxyl group of dephosphocoenzyme A to form coenzyme A. The polypeptide is Dephospho-CoA kinase (Ehrlichia chaffeensis (strain ATCC CRL-10679 / Arkansas)).